Consider the following 1842-residue polypeptide: RNA1 polyprotein (1842 aa).

Residues 458-626 (LDKLTELHNS…MAYDPGNPCA (169 aa)) enclose the SF3 helicase domain. Residue 487–494 (GKSGVGKT) coordinates ATP. A helical membrane pass occupies residues 883-903 (LWSISGNASFVAGAASIFTIG). At S909 the chain carries O-(5'-phospho-RNA)-serine. One can recognise a Peptidase C3 domain in the interval 935–1137 (GPCFGDSALW…ASPVPWDPDF (203 aa)). Catalysis depends on for picornain 3C-like protease activity residues H975, E1011, and C1100. One can recognise a RdRp catalytic domain in the interval 1417–1544 (NSILCCDYSR…SVSEAISSKF (128 aa)).

In terms of processing, specific enzymatic cleavages by picornain 3C-like protease in vivo yield mature proteins. Picornain 3C-like protease is autocatalytically processed. Post-translationally, uridylylated by the polymerase and is covalently linked to the 5'-end of genomic RNA. This uridylylated form acts as a nucleotide-peptide primer for the polymerase.

It localises to the host membrane. The protein localises to the host cytoplasm. The protein resides in the host perinuclear region. Its subcellular location is the host endoplasmic reticulum. It carries out the reaction RNA(n) + a ribonucleoside 5'-triphosphate = RNA(n+1) + diphosphate. Functionally, thiol protease that cleaves the RNA1 and RNA2 polyproteins. Its function is as follows. Plays a role in RNA replication. It is covalently linked to the 5'terminus of both viral single-stranded RNA1 and RNA2 molecules. In terms of biological role, down-regulates the RNA1 polyprotein processing and enhances trans-cleavage of RNA2 polyproteins. The protease cofactor and the putative helicase seem to target the replication complexes to ER membranes. Their physical association causes the membrane rearrangement of host ER that may result in formation of the small membranous vesicles that are the site of viral RNA synthesis. The protease cofactor and the putative helicase seem to target the replication complexes to ER membranes. Their physical association causes the membrane rearrangement of host ER that may result in formation of the small membranous vesicles that are the site of viral RNA synthesis. Functionally, replicates the viral genome. The polypeptide is RNA1 polyprotein (RNA1) (Capsicum annuum (Capsicum pepper)).